A 66-amino-acid polypeptide reads, in one-letter code: U-limacoditoxin(59)-Dv128 (66 aa).

An N-terminal signal peptide occupies residues 1-20 (MRHLLVLLLICLSVIAMAQA). The segment at 21-66 (TFGGGLGGAVGGRRRRDIGGGLGGAVGGRRRRDIGGGLGGAVGGKS) is 3 X 16 AA tandem repeats of [FI]-G-G-G-L-G-G-A-V-G-G-R-R-R-R-D. 2 consecutive repeat copies span residues 22-37 (FGGGLGGAVGGRRRRD) and 38-53 (IGGGLGGAVGGRRRRD). A Glycine amide modification is found at glycine 31. Residues 33–37 (RRRRD) constitute a propeptide that is removed on maturation. Glycine 47 bears the Glycine amide mark. The propeptide occupies 49–53 (RRRRD). The 3; half-length repeat unit spans residues 54–64 (IGGGLGGAVGG).

It belongs to the limacoditoxin-59 family. In terms of tissue distribution, expressed by the venom secretory cell of the spine. The spine is a cuticular structure containing a single large nucleated venom-secreting cell at its base. It is an independent unit capable of producing, storing and injecting venom. On the back of D.vulnerans caterpillars, spines are grouped together by 50 to 100 to form scoli, of which there are eight in D.vulnerans.

The protein resides in the secreted. Probable toxin. The polypeptide is U-limacoditoxin(59)-Dv128 (Doratifera vulnerans (Mottled cup moth)).